Consider the following 183-residue polypeptide: Pyruvoyl-dependent arginine decarboxylase (183 aa).

Ser44 carries the pyruvic acid (Ser) modification.

The protein belongs to the PdaD family. Pyruvate is required as a cofactor.

It catalyses the reaction L-arginine + H(+) = agmatine + CO2. The sequence is that of Pyruvoyl-dependent arginine decarboxylase from Nitrosopumilus maritimus (strain SCM1).